The chain runs to 171 residues: PBAN-type neuropeptides (171 aa).

The first 22 residues, Met-1–Gly-22, serve as a signal peptide directing secretion. A propeptide spanning residues Gly-23–Ser-47 is cleaved from the precursor. At Leu-59 the chain carries Leucine amide. A propeptide spanning residues Thr-63 to Leu-111 is cleaved from the precursor. A disordered region spans residues His-120 to Leu-151. Leu-126, Leu-147, and Leu-157 each carry leucine amide. Positions Ser-160–Tyr-171 are excised as a propeptide.

This sequence belongs to the pyrokinin family.

It is found in the secreted. Its function is as follows. A hormone that controls sex pheromone production in females and pheromone responsiveness in male. Also mediates visceral muscle contractile activity (myotropic activity). This is PBAN-type neuropeptides from Aedes aegypti (Yellowfever mosquito).